A 353-amino-acid polypeptide reads, in one-letter code: Outer membrane protein A (353 aa).

The signal sequence occupies residues 1–21 (MKKTAIALAVALVGFATVAQA). 8 beta stranded membrane passes run 27–37 (TWYTGGKLGWS), 56–67 (QLGAGAFFGYQA), 71–79 (LGFEMGYDW), 97–108 (QGVQLAAKLSYP), 113–121 (LDVYTRLGG), 148–157 (PLVALGAEYA), 162–169 (WATRMEYQ), and 188–196 (LLSVGVSYR). 4 tandem repeats follow at residues 208 to 209 (AP), 210 to 211 (TP), 212 to 213 (AP), and 214 to 215 (AP). The tract at residues 208 to 215 (APTPAPAP) is 4 X 2 AA approximate tandem repeats of A-P. The 129-residue stretch at 217–345 (VDTKRFTLKS…RVEIEVKGYK (129 aa)) folds into the OmpA-like domain. Residues Cys-318 and Cys-330 are joined by a disulfide bond.

Belongs to the outer membrane OOP (TC 1.B.6) superfamily. OmpA family. Monomer and homodimer.

It is found in the cell outer membrane. Functionally, with TolR probably plays a role in maintaining the position of the peptidoglycan cell wall in the periplasm. Acts as a porin with low permeability that allows slow penetration of small solutes; an internal gate slows down solute passage. The protein is Outer membrane protein A of Yersinia pseudotuberculosis serotype I (strain IP32953).